The following is a 419-amino-acid chain: MAVQAALLSTHPFVPFGFGGSPDGLGGAFGALEKGCCFEDEETGTPAGALLAGAESGDAREATRDLLSFIDSASSNIKLALDKPGKSKRKVNHRKYLQKQIKRCSGLMGAAPPGPSSPGAADTPAKRPLAGAQTVPVPVPAHGKAAPRREASQAAAAASLQSRSLAALFDSLRHVPGGADPAGVAEAVPAAGLVRGDAAGSAGGPAVPGARKVPLRARNLPPSFFTEPSRAGGCVCGPSGPGVSLGDLEKGSEAAEFFELLGPDYGAGTEAGALLAAEPLDVFPAGAAVLRGPPELEPGLFDPQPAMVGSLLYPEPWSAPGGPATKKPPLPAPGGGLTLNEPLRSVYPAAADSPGGDDGPGLLASFTPFFSDCALPPAPPPQQVSYDYSAGYSRTAFAGLWRPDGAWEGAPGEEGAPRD.

Residues Leu-107–Ala-157 are disordered.

It belongs to the FAM181 family.

This is Protein FAM181B (FAM181B) from Bos taurus (Bovine).